Consider the following 995-residue polypeptide: Integrator complex subunit 8 (995 aa).

Thr-18 carries the post-translational modification Phosphothreonine. A WFEF motif motif is present at residues 24-29 (WFEFLL). TPR repeat units follow at residues 250–288 (CQVCYDLGAAYFQQGSTDSAIYENAREKFFRTKELLAEI), 320–356 (SQQLTPYSQVHICLRSGSYQEVVQIFIEDNLTFTLPV), 570–603 (VYILMAKGLHCSTVKDFPHSKQLFTACLELVTEF), and 833–866 (HAWLIIQADIYFATNQHSAALHYYLQAGAVCSDF).

Belongs to the Integrator subunit 8 family. As to quaternary structure, component of the Integrator complex, composed of core subunits INTS1, INTS2, INTS3, INTS4, INTS5, INTS6, INTS7, INTS8, INTS9/RC74, INTS10, INTS11/CPSF3L, INTS12, INTS13, INTS14 and INTS15. The core complex associates with protein phosphatase 2A subunits PPP2CA and PPP2R1A, to form the Integrator-PP2A (INTAC) complex.

It is found in the nucleus. The protein localises to the chromosome. Its function is as follows. Component of the integrator complex, a multiprotein complex that terminates RNA polymerase II (Pol II) transcription in the promoter-proximal region of genes. The integrator complex provides a quality checkpoint during transcription elongation by driving premature transcription termination of transcripts that are unfavorably configured for transcriptional elongation: the complex terminates transcription by (1) catalyzing dephosphorylation of the C-terminal domain (CTD) of Pol II subunit POLR2A/RPB1 and SUPT5H/SPT5, (2) degrading the exiting nascent RNA transcript via endonuclease activity and (3) promoting the release of Pol II from bound DNA. The integrator complex is also involved in terminating the synthesis of non-coding Pol II transcripts, such as enhancer RNAs (eRNAs), small nuclear RNAs (snRNAs), telomerase RNAs and long non-coding RNAs (lncRNAs). Within the integrator complex, INTS8 is required for the recruitment of protein phosphatase 2A (PP2A) to transcription pause-release checkpoint. The polypeptide is Integrator complex subunit 8 (Ints8) (Mus musculus (Mouse)).